We begin with the raw amino-acid sequence, 185 residues long: uncharacterized protein (185 aa).

The next 3 helical transmembrane spans lie at 9–29 (LVAA…WAFL), 72–92 (VLFF…ILIV), and 111–131 (FFFI…IPFL).

It is found in the cell membrane. This is an uncharacterized protein from Bacillus subtilis (strain 168).